The following is a 926-amino-acid chain: Probable Xaa-Pro aminopeptidase PTT_10145 (926 aa).

Residues aspartate 274, aspartate 285, glutamate 435, and glutamate 476 each contribute to the Mn(2+) site. Disordered stretches follow at residues 505-538 (GNPG…PGIS), 595-615 (KRDS…LSPV), 668-696 (SSST…EEKH), 711-741 (IGQS…KAAT), and 865-926 (MPVL…FLTR). Residues 506–515 (NPGTTEILNP) show a composition bias toward polar residues. Composition is skewed to basic and acidic residues over residues 685–696 (SRQKSHTVEEKH) and 719–730 (GPEERRRKAQSD). The span at 887–897 (NNATNKRSMID) shows a compositional bias: polar residues. Basic and acidic residues predominate over residues 900–915 (PAERRTRPERPERPAR).

Belongs to the peptidase M24B family. Requires Mn(2+) as cofactor.

It catalyses the reaction Release of any N-terminal amino acid, including proline, that is linked to proline, even from a dipeptide or tripeptide.. Its function is as follows. Catalyzes the removal of a penultimate prolyl residue from the N-termini of peptides. This is Probable Xaa-Pro aminopeptidase PTT_10145 from Pyrenophora teres f. teres (strain 0-1) (Barley net blotch fungus).